A 112-amino-acid polypeptide reads, in one-letter code: Large ribosomal subunit protein uL22 (112 aa).

The protein belongs to the universal ribosomal protein uL22 family. In terms of assembly, part of the 50S ribosomal subunit.

Functionally, this protein binds specifically to 23S rRNA; its binding is stimulated by other ribosomal proteins, e.g. L4, L17, and L20. It is important during the early stages of 50S assembly. It makes multiple contacts with different domains of the 23S rRNA in the assembled 50S subunit and ribosome. In terms of biological role, the globular domain of the protein is located near the polypeptide exit tunnel on the outside of the subunit, while an extended beta-hairpin is found that lines the wall of the exit tunnel in the center of the 70S ribosome. This chain is Large ribosomal subunit protein uL22, found in Nitratidesulfovibrio vulgaris (strain ATCC 29579 / DSM 644 / CCUG 34227 / NCIMB 8303 / VKM B-1760 / Hildenborough) (Desulfovibrio vulgaris).